The chain runs to 276 residues: Anthranilate synthase beta subunit 1, chloroplastic (276 aa).

The transit peptide at 1–50 (MAASTLYKSCLLQPKSGSTTRRLNPSLVNPLTNPTRVSVLGKSRRDVFAK) directs the protein to the chloroplast. One can recognise a Glutamine amidotransferase type-1 domain in the interval 74–273 (PIIVIDNYDS…IKIVEKKESE (200 aa)). C152 functions as the Nucleophile in the catalytic mechanism. Catalysis depends on residues H247 and E249.

Heterotetramer consisting of two non-identical subunits: a beta subunit and a large alpha subunit. In terms of tissue distribution, expressed in the central cylinder of mature primary root zones, including pericycle and early lateral root primordia, and vasculature of cotyledons.

It is found in the plastid. It localises to the chloroplast. It carries out the reaction chorismate + L-glutamine = anthranilate + pyruvate + L-glutamate + H(+). The protein operates within amino-acid biosynthesis; L-tryptophan biosynthesis; L-tryptophan from chorismate: step 1/5. In terms of biological role, part of a heterotetrameric complex that catalyzes the two-step biosynthesis of anthranilate, an intermediate in the biosynthesis of L-tryptophan. In the first step, the glutamine-binding beta subunit of anthranilate synthase (AS) provides the glutamine amidotransferase activity which generates ammonia as a substrate that, along with chorismate, is used in the second step, catalyzed by the large alpha subunit of AS to produce anthranilate. Plays an important regulatory role in auxin production via the tryptophan-dependent biosynthetic pathway. This chain is Anthranilate synthase beta subunit 1, chloroplastic (ASB1), found in Arabidopsis thaliana (Mouse-ear cress).